A 185-amino-acid polypeptide reads, in one-letter code: CASP-like protein 2C1 (185 aa).

Residues M1–E12 lie on the Cytoplasmic side of the membrane. Residues G13–S33 form a helical membrane-spanning segment. At T34 to Q52 the chain is on the extracellular side. The chain crosses the membrane as a helical span at residues A53 to L73. Topologically, residues K74–K105 are cytoplasmic. A helical membrane pass occupies residues A106–L126. Over D127–Q147 the chain is Extracellular. The chain crosses the membrane as a helical span at residues I148–A168. Topologically, residues S169–H185 are cytoplasmic.

This sequence belongs to the Casparian strip membrane proteins (CASP) family. As to quaternary structure, homodimer and heterodimers.

The protein resides in the cell membrane. The polypeptide is CASP-like protein 2C1 (Sorghum bicolor (Sorghum)).